Consider the following 314-residue polypeptide: Homeobox protein DBX1-A (314 aa).

A DNA-binding region (homeobox) is located at residues 175 to 234 (GMLRRAVFSDVQRKALEKMFQKQKYISKPDRKKLAAKLGLKDSQVKIWFQNRRMKWRNSK). Disordered stretches follow at residues 234-279 (KERE…CAPS) and 292-314 (STDS…ITVS). Residues 258–267 (DLSDVGKKSS) are compositionally biased toward basic and acidic residues. The span at 305-314 (SESEDEITVS) shows a compositional bias: acidic residues.

The protein belongs to the H2.0 homeobox family.

It is found in the nucleus. This is Homeobox protein DBX1-A (dbx1a) from Danio rerio (Zebrafish).